A 308-amino-acid chain; its full sequence is Acetylglutamate kinase (308 aa).

Residues 64–65 (GG), Arg-86, and Asn-192 contribute to the substrate site.

This sequence belongs to the acetylglutamate kinase family. ArgB subfamily.

The protein resides in the cytoplasm. The enzyme catalyses N-acetyl-L-glutamate + ATP = N-acetyl-L-glutamyl 5-phosphate + ADP. It participates in amino-acid biosynthesis; L-arginine biosynthesis; N(2)-acetyl-L-ornithine from L-glutamate: step 2/4. Functionally, catalyzes the ATP-dependent phosphorylation of N-acetyl-L-glutamate. This Myxococcus xanthus (strain DK1622) protein is Acetylglutamate kinase.